The following is a 123-amino-acid chain: Small ribosomal subunit protein uS12 (123 aa).

The disordered stretch occupies residues 1-28 (MPTIQQLIRKPRQPKVKRSKSQHLESCP). Residues 9–21 (RKPRQPKVKRSKS) show a composition bias toward basic residues. Position 89 is a 3-methylthioaspartic acid (D89).

It belongs to the universal ribosomal protein uS12 family. In terms of assembly, part of the 30S ribosomal subunit. Contacts proteins S8 and S17. May interact with IF1 in the 30S initiation complex.

Functionally, with S4 and S5 plays an important role in translational accuracy. Its function is as follows. Interacts with and stabilizes bases of the 16S rRNA that are involved in tRNA selection in the A site and with the mRNA backbone. Located at the interface of the 30S and 50S subunits, it traverses the body of the 30S subunit contacting proteins on the other side and probably holding the rRNA structure together. The combined cluster of proteins S8, S12 and S17 appears to hold together the shoulder and platform of the 30S subunit. This chain is Small ribosomal subunit protein uS12, found in Dinoroseobacter shibae (strain DSM 16493 / NCIMB 14021 / DFL 12).